Reading from the N-terminus, the 220-residue chain is Deoxyribose-phosphate aldolase (220 aa).

The Proton donor/acceptor role is filled by Asp89. Lys151 functions as the Schiff-base intermediate with acetaldehyde in the catalytic mechanism. The active-site Proton donor/acceptor is Lys180.

It belongs to the DeoC/FbaB aldolase family. DeoC type 1 subfamily.

Its subcellular location is the cytoplasm. It carries out the reaction 2-deoxy-D-ribose 5-phosphate = D-glyceraldehyde 3-phosphate + acetaldehyde. The protein operates within carbohydrate degradation; 2-deoxy-D-ribose 1-phosphate degradation; D-glyceraldehyde 3-phosphate and acetaldehyde from 2-deoxy-alpha-D-ribose 1-phosphate: step 2/2. Its function is as follows. Catalyzes a reversible aldol reaction between acetaldehyde and D-glyceraldehyde 3-phosphate to generate 2-deoxy-D-ribose 5-phosphate. This chain is Deoxyribose-phosphate aldolase, found in Streptococcus pneumoniae (strain Taiwan19F-14).